Here is a 138-residue protein sequence, read N- to C-terminus: Actin-related protein 2/3 complex subunit 5 (138 aa).

The segment at 1–21 (MNYEDDNVESGQAGKSDAEYK) is disordered.

The protein belongs to the ARPC5 family. As to quaternary structure, component of the Arp2/3 complex composed of arpB/Arp2, arpC/Arp3, arcA/p41-arc, arcB/p34-arc, arcC/p21-arc, arcD/p20-arc and arcE/p16-arc. Interacts with carmil (via the region between the LRR domain and COOH-terminal proline-rich domain); carmil is required for Arp2/3-dependent actin nucleation. Arp2/3 complex, MyoB, MyoC, and the alpha and beta subunits of capping protein all form a larger complex with carmil.

Its subcellular location is the cytoplasm. The protein localises to the cytoskeleton. The protein resides in the cytosol. It is found in the cell cortex. It localises to the cell projection. Its subcellular location is the pseudopodium. Its function is as follows. Functions as a component of the Arp2/3 complex which is involved in regulation of actin polymerization and together with an activating nucleation-promoting factor (NPF) mediates the formation of branched actin networks. Seems to contact the pointed end of the daughter actin filament. The Arp2/3 complex is involved in organizing the actin system in cell motility and chemotaxis, in phagocytosis and macropinocytosis, at late steps of endosome processing, and in mitosis. In concert with a group of other proteins, the Arp2/3 complex plays a general role in the rapid activation and adaptation of the actin system to its multiple functions. The sequence is that of Actin-related protein 2/3 complex subunit 5 (arcE) from Dictyostelium discoideum (Social amoeba).